Here is a 2297-residue protein sequence, read N- to C-terminus: Xin actin-binding repeat-containing protein 1 (2297 aa).

A compositionally biased stretch (basic and acidic residues) spans 1–11 (MAEVAKQKKAT). Residues 1–28 (MAEVAKQKKATEAVCGDEDFPPPPPPLP) are disordered. Xin repeat units follow at residues 104–119 (GEVQSMRWIFENWTLD), 139–154 (GDVKGKSSLFEHSTFD), 169–184 (GDVRTATWLFETQPLD), 208–223 (GDVTGARRLFETKPLD), 248–263 (GDVKKTVKLFQADPCC), 286–301 (SDFKTARWLFETQPLD), 323–338 (GGVDKKKWMFETQPLD), 362–377 (ADVHNKLQLFENQPLS), and 396–411 (GNVGSTLWLFETQPMD). Basic and acidic residues predominate over residues 433–442 (GEVQDKRMQF). The interval 433–461 (GEVQDKRMQFEKSTAGKTAGDSGNKVQND) is disordered. 14 Xin repeats span residues 464–479 (GDVKTFKSLFETLPLN), 494–509 (GDVKGHCSLFETTPLY), 532–547 (GNVQNYKWMFETRPLD), 570–585 (DDTRTAKWMFETQPLD), 605–620 (SNVKTCKWLFETKPMD), 638–653 (ADVKSHTWLFETQPLD), 677–692 (VNVKTVKHLFETEPLD), 715–730 (GDVSRVKEIFESKSLG), 747–762 (GSVHKFTWLFENQPIG), 779–794 (GDVGGKKFIFETLSLD), 818–833 (VNVKSNTMLFESQPLY), 856–871 (GDVRGARWMFETKPLD), 893–908 (GDVKSARWKFETQPLD), and 928–943 (KCVQQSRQLFETEQAS). Residue Ser952 is modified to Phosphoserine. Xin repeat units follow at residues 959–974 (GDVRTSTWLFENQPID), 997–1012 (GDVKRCTWLFESQSLD), and 1033–1048 (ADVKSTTWLFETTPLD). Disordered stretches follow at residues 1617-1680 (PSSH…KDQK), 1866-1900 (KENIQEQAKTSNKDELHFTSRDTSSTPNKHEVPSI), 2147-2191 (SAAR…PRRK), and 2243-2297 (ELSS…TEKH). Low complexity-rich tracts occupy residues 1618–1630 (SSHTQLSSSVSVT) and 1644–1656 (SVSSNADNSKNSS). 2 stretches are compositionally biased toward basic and acidic residues: residues 1876–1885 (SNKDELHFTS) and 2151–2162 (KPAESPTDKPKT). Low complexity predominate over residues 2166–2180 (QSNAGSSSSQNSSAS). Residues 2259-2278 (GMTSPVLQRSGQSFSSNSLS) show a composition bias toward polar residues.

This sequence belongs to the Xin family. In terms of tissue distribution, expressed at intercalated disks in the heart (at protein level).

Its subcellular location is the cell junction. It is found in the adherens junction. The protein resides in the desmosome. Functionally, positively regulates organization of the outer plexiform layer and Muller glia cells in the retina. May protect actin filaments from depolymerization. May play a role in development of normal skeletal muscle morphology and muscle fiber type composition. The protein is Xin actin-binding repeat-containing protein 1 of Danio rerio (Zebrafish).